Consider the following 353-residue polypeptide: Vomeronasal type-1 receptor 1 (353 aa).

Over 1-56 (MVGDTLKLLSPLMTRYFFLLFYSTDSSDLNENQHPLDFDEMAFGKVKSGISFLIQT) the chain is Extracellular. Residues 57 to 77 (GVGILGNSFLLCFYNLILFTG) traverse the membrane as a helical segment. At 78–84 (HKLRPTD) the chain is on the cytoplasmic side. Residues 85 to 105 (LILSQLALANSMVLFFKGIPQ) form a helical membrane-spanning segment. Residues 106–132 (TMAAFGLKYLLNDTGCKFVFYYHRVGT) are Extracellular-facing. Asn117 carries N-linked (GlcNAc...) asparagine glycosylation. Residues 133–153 (RVSLSTICLLNGFQAIKLNPS) form a helical membrane-spanning segment. Over 154–169 (ICRWMEIKIRSPRFID) the chain is Cytoplasmic. Residues 170 to 190 (FCCLLCWAPHVLMNASVLLLV) traverse the membrane as a helical segment. Residues 191–226 (NGPLNSKNSSAKNNYGYCSYKASKRFSSLHAVLYFS) lie on the Extracellular side of the membrane. An N-linked (GlcNAc...) asparagine glycan is attached at Asn198. Residues 227-247 (PDFMSLGFMVWASGSMVFFLY) form a helical membrane-spanning segment. Topologically, residues 248 to 274 (RHKQQVQHNHSNRLSCRPSQEARATHT) are cytoplasmic. The chain crosses the membrane as a helical span at residues 275–295 (IMVLVSSFFVFYSVHSFLTIW). Residues 296-303 (TTVVANPG) are Extracellular-facing. A helical transmembrane segment spans residues 304–324 (QWIVTNSVLVASCFPARSPFV). Topologically, residues 325–353 (LIMSDTHISQFCFACRTRKTLFPNLVVMP) are cytoplasmic.

It belongs to the G-protein coupled receptor 1 family. As to expression, expressed in the olfactory mucosa, very low expression in brain, lung and kidney.

Its subcellular location is the cell membrane. Functionally, putative pheromone receptor. The polypeptide is Vomeronasal type-1 receptor 1 (VN1R1) (Homo sapiens (Human)).